The chain runs to 106 residues: Small ribosomal subunit protein uS10 (106 aa).

The protein belongs to the universal ribosomal protein uS10 family. Part of the 30S ribosomal subunit.

Its function is as follows. Involved in the binding of tRNA to the ribosomes. The protein is Small ribosomal subunit protein uS10 of Wolbachia pipientis subsp. Culex pipiens (strain wPip).